A 357-amino-acid chain; its full sequence is MQNFEIDYVEMYVENLEVAAFSWVDKYAFAVAGTSRSADHRSIALRQGQVTLVLTEPTSDRHPAAAYLQTHGDGVADIAMATSDVAAAYEAAVRAGAEAVRAPGQHSEAAVTTATIGGFGDVVHTLIQRDGTSAELPPGFTGSMDVTNHGKGDVDLLGIDHFAICLNAGDLGPTVEYYERALGFRQIFDEHIVVGAQAMNSTVVQSASGAVTLTLIEPDRNADPGQIDEFLKDHQGAGVQHIAFNSNDAVRAVKALSERGVEFLKTPGAYYDLLGERITLQTHSLDDLRATNVLADEDHGGQLFQIFTASTHPRHTIFFEVIERQGAGTFGSSNIKALYEAVELERTGQSEFGAARR.

VOC domains lie at 5 to 129 (EIDY…LIQR) and 158 to 309 (GIDH…IFTA). His161 contacts Fe cation. His161, Ser201, Thr214, His241, and Gln305 together coordinate substrate. His241 lines the Fe cation pocket. Position 320 (Glu320) interacts with Fe cation.

The protein belongs to the 4HPPD family. In terms of assembly, monomer. Fe cation is required as a cofactor.

It catalyses the reaction 3-(4-hydroxyphenyl)pyruvate + O2 = (S)-4-hydroxymandelate + CO2. It participates in antibiotic biosynthesis; vancomycin biosynthesis. Functionally, required to synthesize hydroxyphenylglycine, a recurring skeletal component of nonproteinogenic macrocyclic peptide antibiotics such as vancomycin. Catalyzes the conversion of p-hydroxyphenylpyruvate to p-hydroxymandelate. The decarboxylation and hydroxylation activities of HmaS show novel and distinct regioselectivity, compared to all other known p-hydroxyphenylpyruvate dioxygenases, by hydroxylating the benzylic position of the substrate instead of the phenyl ring. The sequence is that of 4-hydroxymandelate synthase from Amycolatopsis orientalis (Nocardia orientalis).